We begin with the raw amino-acid sequence, 212 residues long: Root-specific lectin (212 aa).

The first 26 residues, Met1–Ala26, serve as a signal peptide directing secretion. Gln27 bears the Pyrrolidone carboxylic acid mark. 4 consecutive Chitin-binding type-1 domains span residues Gln27 to Thr68, Ser69 to Ala111, Asp112 to Thr154, and Asp155 to Gly197. Disulfide bonds link Cys29–Cys44, Cys38–Cys50, Cys43–Cys57, Cys61–Cys66, Cys72–Cys87, Cys81–Cys93, Cys86–Cys100, Cys104–Cys109, Cys115–Cys130, Cys124–Cys136, Cys129–Cys143, Cys147–Cys152, Cys158–Cys173, Cys167–Cys179, Cys172–Cys186, and Cys190–Cys195. Residue Met36–Cys38 participates in substrate binding. Ser88–Tyr99 is a binding site for substrate. Residue Ser140–Glu141 participates in substrate binding. The N-linked (GlcNAc...) asparagine glycan is linked to Asn206.

In roots.

Functionally, carbohydrate binding. This chain is Root-specific lectin, found in Hordeum vulgare (Barley).